The chain runs to 605 residues: Anaerobic ribonucleoside-triphosphate reductase (605 aa).

DCTP contacts are provided by His-64 and His-66. Residues His-64, His-66, Asp-67, Glu-100, and Lys-103 each contribute to the dGTP site. DCTP contacts are provided by residues Glu-100, Lys-103, Gln-114, Lys-146, and 445–448 (AENL). The dATP site is built by Glu-100, Lys-103, Gln-114, and Lys-146. Glu-100 lines the dTTP pocket. Residues Gln-114 and Lys-146 each contribute to the dTTP site. Positions 146, 447, and 448 each coordinate dGTP. In terms of domain architecture, Glycine radical spans 482 to 605 (ENITPFEKIS…KEIMHRVKHQ (124 aa)). The Zn(2+) site is built by Cys-543, Cys-546, Cys-561, and Cys-564. At Gly-580 the chain carries Glycine radical.

This sequence belongs to the anaerobic ribonucleoside-triphosphate reductase family. In terms of assembly, homodimer. Forms a tetramer composed of two NrdD and two NrdG subunits.

The enzyme catalyses a ribonucleoside 5'-triphosphate + formate + H(+) = a 2'-deoxyribonucleoside 5'-triphosphate + CO2 + H2O. With respect to regulation, activated under anaerobic conditions by NrdG, a tightly associated activase. Activation involves the formation of a glycyl radical at Gly-580. Catalyzes the conversion of ribonucleotides into deoxyribonucleotides, which are required for DNA synthesis and repair. This is Anaerobic ribonucleoside-triphosphate reductase from Enterobacteria phage T4 (Bacteriophage T4).